Consider the following 296-residue polypeptide: Elongation factor Ts (296 aa).

Positions 79–82 are involved in Mg(2+) ion dislocation from EF-Tu; it reads TDFV.

Belongs to the EF-Ts family.

Its subcellular location is the cytoplasm. In terms of biological role, associates with the EF-Tu.GDP complex and induces the exchange of GDP to GTP. It remains bound to the aminoacyl-tRNA.EF-Tu.GTP complex up to the GTP hydrolysis stage on the ribosome. The sequence is that of Elongation factor Ts from Paracoccus denitrificans (strain Pd 1222).